The primary structure comprises 185 residues: Elongation factor P (185 aa).

This sequence belongs to the elongation factor P family.

Its subcellular location is the cytoplasm. The protein operates within protein biosynthesis; polypeptide chain elongation. Functionally, involved in peptide bond synthesis. Stimulates efficient translation and peptide-bond synthesis on native or reconstituted 70S ribosomes in vitro. Probably functions indirectly by altering the affinity of the ribosome for aminoacyl-tRNA, thus increasing their reactivity as acceptors for peptidyl transferase. The chain is Elongation factor P from Burkholderia cenocepacia (strain HI2424).